Consider the following 279-residue polypeptide: MSRERPPGTDIPRNLSFIAALTERAYYRSQRPSLEEEPEEEPGEGGTRFGARSRAHAPSRGRRARSAPAGGGGARAPRSRSPDTRKRVRFADALGLELAVVRRFRPGELPRVPRHVQIQLQRDALRHFAPCQPRARGLQEARAALEPASEPGFAARLLTQRICLERAEAGPLGVAGSARVVDLAYEKRVSVRWSADGWRSQREAPAAYAGPAPPPPRADRFAFRLPAPPIGGALLFALRYRVTGHEFWDNNGGRDYALRGPEHPGSGGAPEPQGWIHFI.

A phosphoserine mark is found at serine 16 and serine 33. Residues 28 to 86 (RSQRPSLEEEPEEEPGEGGTRFGARSRAHAPSRGRRARSAPAGGGGARAPRSRSPDTRK) form a disordered region. The segment covering 51-65 (ARSRAHAPSRGRRAR) has biased composition (basic residues). Position 66 is a phosphoserine (serine 66). Positions 87-90 (RVRF) match the PP1-binding motif motif. The CBM21 domain occupies 154–259 (AARLLTQRIC…NNGGRDYALR (106 aa)). Residues 176–198 (GSARVVDLAYEKRVSVRWSADGW) are glycogen-binding motif. The interval 248–256 (WDNNGGRDY) is substrate-binding motif.

In terms of tissue distribution, expressed in skeletal muscle and heart with barely detectable levels in liver.

Acts as a glycogen-targeting subunit for PP1. PP1 is involved in glycogen metabolism and contributes to the activation of glycogen synthase leading to an increase in glycogen synthesis. In Homo sapiens (Human), this protein is Protein phosphatase 1 regulatory subunit 3E (PPP1R3E).